The sequence spans 642 residues: G protein-coupled receptor kinase 1 (642 aa).

The tract at residues 1–202 (MEIENIVANT…LEKRPVDKHT (202 aa)) is N-terminal. The 137-residue stretch at 52 to 188 (YAFVVEKQPI…AESMYFHRFL (137 aa)) folds into the RGS domain. A Protein kinase domain is found at 203–470 (FRLYRVLGKG…AEEIRAHPFF (268 aa)). Residues 209–217 (LGKGGFGEV) and Lys232 contribute to the ATP site. Asp328 (proton acceptor) is an active-site residue. The AGC-kinase C-terminal domain maps to 480 to 545 (EPVPWKKMEA…GCVSIPWQSE (66 aa)). Residues 612 to 642 (VEQQQPPKTSTQTPAVRSSRAASASGRTLVI) form a disordered region. The segment covering 614 to 636 (QQQPPKTSTQTPAVRSSRAASAS) has biased composition (low complexity).

The protein belongs to the protein kinase superfamily. AGC Ser/Thr protein kinase family. GPRK subfamily.

It catalyses the reaction [G-protein-coupled receptor] + ATP = [G-protein-coupled receptor]-phosphate + ADP + H(+). Specifically phosphorylates the activated forms of G protein-coupled receptors. This chain is G protein-coupled receptor kinase 1 (grk-1), found in Caenorhabditis elegans.